We begin with the raw amino-acid sequence, 313 residues long: Short-chain dehydrogenase/reductase family 9C member 7 (313 aa).

An NADP(+)-binding site is contributed by 29 to 53; it reads FITGCDSGFGNLLAKQLVDRGMQVL. Substrate is bound at residue Ser-160. Tyr-172 acts as the Proton acceptor in catalysis. Phosphoserine is present on Ser-185.

The protein belongs to the short-chain dehydrogenases/reductases (SDR) family. In terms of tissue distribution, expressed in the skin. Expressed in granular and cornified layers of the epidermis (at protein level). Highly expressed in liver.

Its subcellular location is the cytoplasm. It carries out the reaction a N-[omega-(9R,10R)-epoxy-(13R)-hydroxy-(11E)-octadecenoyloxy]acyl-beta-D-glucosyl-(1&lt;-&gt;1)-sphing-4E-enine + NAD(+) = a N-[omega-(9R,10R)-epoxy-13-oxo-(11E)-octadecenoyloxy]acyl-beta-D-glucosyl-(1&lt;-&gt;1)-sphing-4E-enine + NADH + H(+). It catalyses the reaction a N-[omega-(9R,10R)-epoxy-(13R)-hydroxy-(11E)-octadecenoyloxy]-acylsphing-4E-enine + NAD(+) = a N-[omega-(9R,10R)-epoxy-13-oxo-(11E)-octadecenoyloxy]-acylsphing-4E-enine + NADH + H(+). In terms of biological role, plays a crucial role in the formation of the epidermal permeability barrier. Catalyzes the NAD+-dependent dehydrogenation of the linoleate 9,10-trans-epoxy-11E-13-alcohol esterified in omega-O-acylceramides (such as in N-[omega-(9R,10R)-epoxy-(13R)-hydroxy-(11E)-octadecenoyloxy]-acylsphing-4E-enine) to the corresponding 13-ketone, the reactive moiety required for binding of epidermal ceramides to proteins. Displays weak conversion of all-trans-retinal to all-trans-retinol in the presence of NADH. Has apparently no steroid dehydrogenase activity. The chain is Short-chain dehydrogenase/reductase family 9C member 7 (SDR9C7) from Homo sapiens (Human).